A 377-amino-acid chain; its full sequence is MQRSPPGYGAQDDPPSRRDCAWAPGIGAAAEARGLPVTNVSPTSPASPSSLPRSPPRSPESGRYGFGRGERQTADELRIRRPMNAFMVWAKDERKRLAQQNPDLHNAVLSKMLGKAWKELNTAEKRPFVEEAERLRVQHLRDHPNYKYRPRRKKQARKVRRLEPGLLLPGLVQPSAPPEAFAAASGSARSFRELPTLGAEFDGLGLPTPERSPLDGLEPGEASFFPPPLAPEDCALRAFRAPYAPELARDPSFCYGAPLAEALRTAPPAAPLAGLYYGTLGTPGPFPNPLSPPPESPSLEGTEQLEPTADLWADVDLTEFDQYLNCSRTRPDATTLPYHVALAKLGPRAMSCPEESSLISALSDASSAVYYSACISG.

Residues 1–76 form a disordered region; it reads MQRSPPGYGA…GRGERQTADE (76 aa). Composition is skewed to low complexity over residues 21–34 and 41–52; these read AWAP…EARG and SPTSPASPSSLP. The HMG box DNA-binding region spans 79-147; sequence IRRPMNAFMV…QHLRDHPNYK (69 aa). Interaction with DNA regions lie at residues 81–94 and 105–117; these read RPMN…KDER and HNAV…GKAW. Residues 160 to 225 form an important for transcriptional activation region; the sequence is RRLEPGLLLP…GLEPGEASFF (66 aa). A Sox C-terminal domain is found at 256–376; that stretch reads GAPLAEALRT…SAVYYSACIS (121 aa). Positions 318–326 match the 9aaTAD motif; it reads TEFDQYLNC.

In terms of assembly, interacts (via C-terminus) with MEF2C (via MADS box). As to expression, detected in adult lung, heart and skeletal muscles.

It is found in the nucleus. In terms of biological role, transcriptional activator that binds to the consensus sequence 5'-AACAAAG-3' in the promoter of target genes and plays an essential role in embryonic cardiovascular development and lymphangiogenesis. Activates transcription of PROX1 and other genes coding for lymphatic endothelial markers. Plays an essential role in triggering the differentiation of lymph vessels, but is not required for the maintenance of differentiated lymphatic endothelial cells. Plays an important role in postnatal angiogenesis, where it is functionally redundant with SOX17. Interaction with MEF2C enhances transcriptional activation. Besides, required for normal hair development. In Mus musculus (Mouse), this protein is Transcription factor SOX-18 (Sox18).